A 103-amino-acid chain; its full sequence is Small ribosomal subunit protein uS10 (103 aa).

This sequence belongs to the universal ribosomal protein uS10 family. Part of the 30S ribosomal subunit.

Functionally, involved in the binding of tRNA to the ribosomes. The chain is Small ribosomal subunit protein uS10 from Chlorobium limicola (strain DSM 245 / NBRC 103803 / 6330).